We begin with the raw amino-acid sequence, 222 residues long: Glutathione S-transferase A3 (222 aa).

Position 2 is an N-acetylalanine (alanine 2). A GST N-terminal domain is found at 3-83; it reads GKPKLHYFNG…YIASKYNLYG (81 aa). The residue at position 4 (lysine 4) is an N6-succinyllysine. Residues tyrosine 9, arginine 45, 54–55, and 67–68 contribute to the glutathione site; these read QV and QT. Residues 85 to 207 form the GST C-terminal domain; sequence DIKERALIDM…LQPGSPRKPP (123 aa).

It belongs to the GST superfamily. Alpha family. In terms of assembly, homodimer.

It localises to the cytoplasm. The enzyme catalyses RX + glutathione = an S-substituted glutathione + a halide anion + H(+). The catalysed reaction is androst-5-ene-3,17-dione = androst-4-ene-3,17-dione. It carries out the reaction pregn-5-ene-3,20-dione = progesterone. Functionally, conjugation of reduced glutathione to a wide number of exogenous and endogenous hydrophobic electrophiles. Catalyzes isomerization reactions that contribute to the biosynthesis of steroid hormones. Efficiently catalyze obligatory double-bond isomerizations of delta(5)-androstene-3,17-dione and delta(5)-pregnene-3,20-dione, precursors to testosterone and progesterone, respectively. Has substantial activity toward aflatoxin B1-8,9-epoxide. The chain is Glutathione S-transferase A3 from Homo sapiens (Human).